A 290-amino-acid chain; its full sequence is Eukaryotic translation initiation factor 3 subunit G (290 aa).

The interval 1 to 34 (MSRLGNRAADWADDEEFDDPSALPAQQVTTNKDG) is disordered. Positions 210 to 288 (ATLRVTNVSE…LILRVEFAKR (79 aa)) constitute an RRM domain.

This sequence belongs to the eIF-3 subunit G family. In terms of assembly, component of the eukaryotic translation initiation factor 3 (eIF-3) complex.

The protein resides in the cytoplasm. In terms of biological role, RNA-binding component of the eukaryotic translation initiation factor 3 (eIF-3) complex, which is involved in protein synthesis of a specialized repertoire of mRNAs and, together with other initiation factors, stimulates binding of mRNA and methionyl-tRNAi to the 40S ribosome. The eIF-3 complex specifically targets and initiates translation of a subset of mRNAs involved in cell proliferation. This subunit can bind 18S rRNA. In Aspergillus fumigatus (strain CBS 144.89 / FGSC A1163 / CEA10) (Neosartorya fumigata), this protein is Eukaryotic translation initiation factor 3 subunit G (tif35).